The primary structure comprises 157 residues: 3-dehydroquinate dehydratase (157 aa).

Tyrosine 29 acts as the Proton acceptor in catalysis. Substrate-binding residues include asparagine 80, histidine 86, and aspartate 93. Residue histidine 107 is the Proton donor of the active site. Substrate is bound by residues 108-109 (IS) and arginine 118.

This sequence belongs to the type-II 3-dehydroquinase family. In terms of assembly, homododecamer.

It catalyses the reaction 3-dehydroquinate = 3-dehydroshikimate + H2O. It functions in the pathway metabolic intermediate biosynthesis; chorismate biosynthesis; chorismate from D-erythrose 4-phosphate and phosphoenolpyruvate: step 3/7. Catalyzes a trans-dehydration via an enolate intermediate. The polypeptide is 3-dehydroquinate dehydratase (aroQ) (Streptomyces coelicolor (strain ATCC BAA-471 / A3(2) / M145)).